The following is a 268-amino-acid chain: Undecaprenyl-diphosphatase (268 aa).

Transmembrane regions (helical) follow at residues 43–63, 83–103, 109–129, 144–164, 184–204, 218–238, and 246–266; these read FWNT…VVIY, FVIG…IAGK, LFNP…LMWV, FPLP…IPGV, AAEF…AYDF, IVAI…KAFL, and FTFF…ALAL.

Belongs to the UppP family.

It is found in the cell inner membrane. The catalysed reaction is di-trans,octa-cis-undecaprenyl diphosphate + H2O = di-trans,octa-cis-undecaprenyl phosphate + phosphate + H(+). In terms of biological role, catalyzes the dephosphorylation of undecaprenyl diphosphate (UPP). Confers resistance to bacitracin. The polypeptide is Undecaprenyl-diphosphatase (Nitrobacter hamburgensis (strain DSM 10229 / NCIMB 13809 / X14)).